The primary structure comprises 241 residues: ATP phosphoribosyltransferase (241 aa).

This sequence belongs to the ATP phosphoribosyltransferase family. Short subfamily. In terms of assembly, heteromultimer composed of HisG and HisZ subunits.

Its subcellular location is the cytoplasm. It carries out the reaction 1-(5-phospho-beta-D-ribosyl)-ATP + diphosphate = 5-phospho-alpha-D-ribose 1-diphosphate + ATP. It participates in amino-acid biosynthesis; L-histidine biosynthesis; L-histidine from 5-phospho-alpha-D-ribose 1-diphosphate: step 1/9. Functionally, catalyzes the condensation of ATP and 5-phosphoribose 1-diphosphate to form N'-(5'-phosphoribosyl)-ATP (PR-ATP). Has a crucial role in the pathway because the rate of histidine biosynthesis seems to be controlled primarily by regulation of HisG enzymatic activity. This chain is ATP phosphoribosyltransferase, found in Gluconobacter oxydans (strain 621H) (Gluconobacter suboxydans).